Here is a 216-residue protein sequence, read N- to C-terminus: NADH-quinone oxidoreductase subunit C (216 aa).

It belongs to the complex I 30 kDa subunit family. In terms of assembly, NDH-1 is composed of 14 different subunits. Subunits NuoB, C, D, E, F, and G constitute the peripheral sector of the complex.

The protein localises to the cell inner membrane. It carries out the reaction a quinone + NADH + 5 H(+)(in) = a quinol + NAD(+) + 4 H(+)(out). In terms of biological role, NDH-1 shuttles electrons from NADH, via FMN and iron-sulfur (Fe-S) centers, to quinones in the respiratory chain. The immediate electron acceptor for the enzyme in this species is believed to be ubiquinone. Couples the redox reaction to proton translocation (for every two electrons transferred, four hydrogen ions are translocated across the cytoplasmic membrane), and thus conserves the redox energy in a proton gradient. This is NADH-quinone oxidoreductase subunit C from Francisella tularensis subsp. holarctica (strain FTNF002-00 / FTA).